Reading from the N-terminus, the 199-residue chain is Twist-related protein 1 (199 aa).

Positions 1–18 (MMQDVSSSPVSPADDSLS) are enriched in low complexity. Residues 1 to 102 (MMQDVSSSPV…GGGSPQSYEE (102 aa)) are disordered. Residues 34–43 (RGGRKRRSSR) show a composition bias toward basic residues. 2 stretches are compositionally biased toward gly residues: residues 46 to 65 (AGGG…GGDE) and 80 to 96 (GCGG…GGGS). In terms of domain architecture, bHLH spans 105-156 (TQRVMANVRERQRTQSLNEAFAALRKIIPTLPSDKLSKIQTLKLAARYIDFL). Residues 158-188 (QVLQSDELDSKMASCSYVAHERLSYAFSVWR) are sufficient for transactivation activity.

As to quaternary structure, efficient DNA binding requires dimerization with another bHLH protein. Homodimer or heterodimer with E proteins such as TCF3. ID1 binds preferentially to TCF3 but does not interact efficiently with TWIST1 so ID1 levels control the amount of TCF3 available to dimerize with TWIST and thus determine the type of dimer formed.

The protein resides in the nucleus. In terms of biological role, acts as a transcriptional regulator. Inhibits myogenesis by sequestrating E proteins, inhibiting trans-activation by MEF2, and inhibiting DNA-binding by MYOD1 through physical interaction. This interaction probably involves the basic domains of both proteins. Also represses expression of pro-inflammatory cytokines such as TNFA and IL1B. Regulates cranial suture patterning and fusion. Activates transcription as a heterodimer with E proteins. Regulates gene expression differentially, depending on dimer composition. Homodimers induce expression of FGFR2 and POSTN while heterodimers repress FGFR2 and POSTN expression and induce THBS1 expression. Heterodimerization is also required for osteoblast differentiation. Represses the activity of the circadian transcriptional activator: NPAS2-BMAL1 heterodimer. This is Twist-related protein 1 (TWIST1) from Microcebus murinus (Gray mouse lemur).